We begin with the raw amino-acid sequence, 1461 residues long: Gag-Pro-Pol polyprotein (1461 aa).

Glycine 2 is lipidated: N-myristoyl glycine; by host. Residues 94 to 97 (PSAP) carry the PTAP/PSAP motif motif. The interval 94–121 (PSAPAAPVPTPICPTTTPPPPPPPSPEA) is disordered. Over residues 97-121 (PAAPVPTPICPTTTPPPPPPPSPEA) the composition is skewed to pro residues. The short motif at 124 to 127 (PPPY) is the PPXY motif element. Positions 130 to 133 (PTTT) match the PTAP/PSAP motif motif. 2 CCHC-type zinc fingers span residues 361 to 378 (QPCF…DCTQ) and 384 to 401 (GPCP…DCPQ). Residues 399-425 (CPQLKPPQEEGEPLLLDLPSTSGTTEE) are disordered. The Peptidase A2 domain occupies 473–551 (TQALLDTGAD…NKWTIIGRDA (79 aa)). Aspartate 478 (for protease activity; shared with dimeric partner) is an active-site residue. The region spanning 612-802 (LEAGHIEPYS…GQIRFLGQVI (191 aa)) is the Reverse transcriptase domain. The Mg(2+) site is built by aspartate 678, aspartate 753, aspartate 754, aspartate 1038, glutamate 1073, aspartate 1095, aspartate 1156, aspartate 1229, and aspartate 1286. An RNase H type-1 domain is found at 1029–1164 (LDTAPCLFSD…TDSLILAPLV (136 aa)). Positions 1218 to 1387 (RGLLPNHIWQ…PPIPEASTPP (170 aa)) constitute an Integrase catalytic domain. The segment at residues 1392–1441 (KWFYYKLPGLTNQRWKGPLQSLQEAAGAALLSIDGSPRWIPWRFLKKAAC) is a DNA-binding region (integrase-type).

As to quaternary structure, homodimer; the homodimers are part of the immature particles. Interacts with human TSG101 and NEDD4; these interactions are essential for budding and release of viral particles. In terms of assembly, homodimer; further assembles as homohexamers. Requires Mg(2+) as cofactor. Phosphorylation of the matrix protein p19 by MAPK1 seems to play a role in budding. Post-translationally, myristoylated. Myristoylation of the matrix (MA) domain mediates the transport and binding of Gag polyproteins to the host plasma membrane and is required for the assembly of viral particles. In terms of processing, specific enzymatic cleavages by the viral protease yield mature proteins. The polyprotein is cleaved during and after budding, this process is termed maturation. The protease is autoproteolytically processed at its N- and C-termini.

The protein localises to the virion. It catalyses the reaction Endonucleolytic cleavage to 5'-phosphomonoester.. The enzyme catalyses DNA(n) + a 2'-deoxyribonucleoside 5'-triphosphate = DNA(n+1) + diphosphate. Its function is as follows. The matrix domain targets Gag, Gag-Pro and Gag-Pro-Pol polyproteins to the plasma membrane via a multipartite membrane binding signal, that includes its myristoylated N-terminus. In terms of biological role, matrix protein. Functionally, forms the spherical core of the virus that encapsulates the genomic RNA-nucleocapsid complex. Binds strongly to viral nucleic acids and promote their aggregation. Also destabilizes the nucleic acids duplexes via highly structured zinc-binding motifs. Its function is as follows. The aspartyl protease mediates proteolytic cleavages of Gag and Gag-Pol polyproteins during or shortly after the release of the virion from the plasma membrane. Cleavages take place as an ordered, step-wise cascade to yield mature proteins. This process is called maturation. Displays maximal activity during the budding process just prior to particle release from the cell (Potential). Cleaves the translation initiation factor eIF4G leading to the inhibition of host cap-dependent translation. In terms of biological role, RT is a multifunctional enzyme that converts the viral RNA genome into dsDNA in the cytoplasm, shortly after virus entry into the cell. This enzyme displays a DNA polymerase activity that can copy either DNA or RNA templates, and a ribonuclease H (RNase H) activity that cleaves the RNA strand of RNA-DNA heteroduplexes in a partially processive 3' to 5'-endonucleasic mode. Conversion of viral genomic RNA into dsDNA requires many steps. A tRNA-Pro binds to the primer-binding site (PBS) situated at the 5'-end of the viral RNA. RT uses the 3' end of the tRNA primer to perform a short round of RNA-dependent minus-strand DNA synthesis. The reading proceeds through the U5 region and ends after the repeated (R) region which is present at both ends of viral RNA. The portion of the RNA-DNA heteroduplex is digested by the RNase H, resulting in a ssDNA product attached to the tRNA primer. This ssDNA/tRNA hybridizes with the identical R region situated at the 3' end of viral RNA. This template exchange, known as minus-strand DNA strong stop transfer, can be either intra- or intermolecular. RT uses the 3' end of this newly synthesized short ssDNA to perform the RNA-dependent minus-strand DNA synthesis of the whole template. RNase H digests the RNA template except for a polypurine tract (PPT) situated at the 5' end of the genome. It is not clear if both polymerase and RNase H activities are simultaneous. RNase H probably can proceed both in a polymerase-dependent (RNA cut into small fragments by the same RT performing DNA synthesis) and a polymerase-independent mode (cleavage of remaining RNA fragments by free RTs). Secondly, RT performs DNA-directed plus-strand DNA synthesis using the PPT that has not been removed by RNase H as primer. PPT and tRNA primers are then removed by RNase H. The 3' and 5' ssDNA PBS regions hybridize to form a circular dsDNA intermediate. Strand displacement synthesis by RT to the PBS and PPT ends produces a blunt ended, linear dsDNA copy of the viral genome that includes long terminal repeats (LTRs) at both ends. Functionally, catalyzes viral DNA integration into the host chromosome, by performing a series of DNA cutting and joining reactions. This is Gag-Pro-Pol polyprotein (gag-pro-pol) from Human T-cell leukemia virus 2 (HTLV-2).